The chain runs to 81 residues: Dermaseptin-B7 (81 aa).

A signal peptide spans 1 to 22 (MASLKKSLFLVLFLGLVSLSIC). Residues 23–44 (EEEKRENEDEEEQEDDEQSEMK) constitute a propeptide that is removed on maturation. A disordered region spans residues 24–48 (EEKRENEDEEEQEDDEQSEMKRGLW). Positions 30–40 (EDEEEQEDDEQ) are enriched in acidic residues. Position 78 is a valine amide (Val78). A propeptide spanning residues 80–81 (EQ) is cleaved from the precursor.

Belongs to the frog skin active peptide (FSAP) family. Dermaseptin subfamily. As to expression, expressed by the skin glands.

It is found in the secreted. In terms of biological role, has antimicrobial activity. This chain is Dermaseptin-B7 (DRG1), found in Phyllomedusa bicolor (Two-colored leaf frog).